The following is a 435-amino-acid chain: 3-phosphoshikimate 1-carboxyvinyltransferase (435 aa).

Positions 22, 23, and 27 each coordinate 3-phosphoshikimate. A phosphoenolpyruvate-binding site is contributed by Lys-22. Residues Gly-94 and Arg-122 each coordinate phosphoenolpyruvate. The 3-phosphoshikimate site is built by Ser-166, Gln-168, Asp-314, and Lys-341. Gln-168 serves as a coordination point for phosphoenolpyruvate. Asp-314 acts as the Proton acceptor in catalysis. Phosphoenolpyruvate contacts are provided by Arg-345 and Arg-388.

Belongs to the EPSP synthase family. Monomer.

The protein localises to the cytoplasm. The catalysed reaction is 3-phosphoshikimate + phosphoenolpyruvate = 5-O-(1-carboxyvinyl)-3-phosphoshikimate + phosphate. The protein operates within metabolic intermediate biosynthesis; chorismate biosynthesis; chorismate from D-erythrose 4-phosphate and phosphoenolpyruvate: step 6/7. Its function is as follows. Catalyzes the transfer of the enolpyruvyl moiety of phosphoenolpyruvate (PEP) to the 5-hydroxyl of shikimate-3-phosphate (S3P) to produce enolpyruvyl shikimate-3-phosphate and inorganic phosphate. The sequence is that of 3-phosphoshikimate 1-carboxyvinyltransferase from Ruthia magnifica subsp. Calyptogena magnifica.